Consider the following 601-residue polypeptide: Glutathione-regulated potassium-efflux system protein KefB (601 aa).

A run of 13 helical transmembrane segments spans residues 4 to 24 (ADLL…VPLA), 29 to 49 (IGAV…GLGF), 55 to 75 (EILH…GLEL), 87 to 107 (IFGV…GLLM), 111 to 131 (FLWQ…TAMA), 152 to 172 (VLLF…LLAG), 177 to 197 (HFDW…LIGG), 207 to 227 (FIAA…LVLS), 230 to 250 (LFMD…GVLL), 262 to 282 (AIDP…GMSL), 284 to 304 (LGVL…LVAI), 324 to 344 (MQFA…FSTA), and 356 to 376 (ALLL…MKGI). The region spanning 400–519 (KPQVIVVGFG…AGVTQFSRET (120 aa)) is the RCK N-terminal domain.

It belongs to the monovalent cation:proton antiporter 2 (CPA2) transporter (TC 2.A.37) family. KefB subfamily. In terms of assembly, interacts with the regulatory subunit KefG.

The protein resides in the cell inner membrane. Its function is as follows. Pore-forming subunit of a potassium efflux system that confers protection against electrophiles. Catalyzes K(+)/H(+) antiport. In Salmonella schwarzengrund (strain CVM19633), this protein is Glutathione-regulated potassium-efflux system protein KefB.